A 389-amino-acid chain; its full sequence is MAKKKLGTVARLSELDKSLRNRLLRVRSRLLFIVHSAIGAGVAYWIAVEVIKHGQPFFAPMSAVIILGLSGGDRIKRATELTLGCALGVGLGDLLIMQIGTGYWQIFVVVGLALLVASFVSPAPLVSNQMAIGGILIATMFPPGDGGSIDRMIDAFIGGGVGILVIALLPSSPLDAGRHQVANVLGIAASVLEDVAASLKAKDAAKLNNALEALRRSQASVNKLETAASSGKEATTVSPFLWGDRARVRSLYRILAPVDNVIRNARVLARRAVVLTEDNDTVSDEQIHVIEEIADIALRLSDLYEHHKEISEALEIPELVNRLRQLGSEVGEDIAEDRVLSAQVILAQSRSIIVDLLQICGMSRESAVAVLVPTSESPAYPPELWDDED.

4 consecutive transmembrane segments (helical) span residues 31-51, 96-116, 123-143, and 152-172; these read LFIVHSAIGAGVAYWIAVEVI, IMQIGTGYWQIFVVVGLALLV, APLVSNQMAIGGILIATMFPP, and MIDAFIGGGVGILVIALLPSS.

The protein to M.tuberculosis Rv2571c.

It is found in the cell membrane. This is an uncharacterized protein from Corynebacterium glutamicum (strain ATCC 13032 / DSM 20300 / JCM 1318 / BCRC 11384 / CCUG 27702 / LMG 3730 / NBRC 12168 / NCIMB 10025 / NRRL B-2784 / 534).